Here is a 103-residue protein sequence, read N- to C-terminus: Small ribosomal subunit protein uS10 (103 aa).

Belongs to the universal ribosomal protein uS10 family. As to quaternary structure, part of the 30S ribosomal subunit.

In terms of biological role, involved in the binding of tRNA to the ribosomes. In Paraburkholderia xenovorans (strain LB400), this protein is Small ribosomal subunit protein uS10.